The following is a 148-amino-acid chain: Lysozyme C (148 aa).

Residues 1-18 form the signal peptide; that stretch reads MKALIILGLVLLSVTVQG. The C-type lysozyme domain occupies 19–148; it reads KIFERCELAR…VSQYVKGCGV (130 aa). Intrachain disulfides connect Cys-24–Cys-146, Cys-48–Cys-134, Cys-83–Cys-99, and Cys-95–Cys-113. Active-site residues include Glu-53 and Asp-71.

Belongs to the glycosyl hydrolase 22 family. In terms of assembly, monomer.

The protein resides in the secreted. The enzyme catalyses Hydrolysis of (1-&gt;4)-beta-linkages between N-acetylmuramic acid and N-acetyl-D-glucosamine residues in a peptidoglycan and between N-acetyl-D-glucosamine residues in chitodextrins.. Functionally, lysozymes have primarily a bacteriolytic function; those in tissues and body fluids are associated with the monocyte-macrophage system and enhance the activity of immunoagents. This is Lysozyme C (LYZ) from Pygathrix nemaeus (Red-shanked douc langur).